We begin with the raw amino-acid sequence, 539 residues long: Bifunctional purine biosynthesis protein PurH (539 aa).

The MGS-like domain occupies 8 to 159 (FPIPDLHRVR…KNYAYTGVVT (152 aa)).

It belongs to the PurH family.

It carries out the reaction (6R)-10-formyltetrahydrofolate + 5-amino-1-(5-phospho-beta-D-ribosyl)imidazole-4-carboxamide = 5-formamido-1-(5-phospho-D-ribosyl)imidazole-4-carboxamide + (6S)-5,6,7,8-tetrahydrofolate. The enzyme catalyses IMP + H2O = 5-formamido-1-(5-phospho-D-ribosyl)imidazole-4-carboxamide. It participates in purine metabolism; IMP biosynthesis via de novo pathway; 5-formamido-1-(5-phospho-D-ribosyl)imidazole-4-carboxamide from 5-amino-1-(5-phospho-D-ribosyl)imidazole-4-carboxamide (10-formyl THF route): step 1/1. Its pathway is purine metabolism; IMP biosynthesis via de novo pathway; IMP from 5-formamido-1-(5-phospho-D-ribosyl)imidazole-4-carboxamide: step 1/1. The chain is Bifunctional purine biosynthesis protein PurH from Bartonella tribocorum (strain CIP 105476 / IBS 506).